A 540-amino-acid polypeptide reads, in one-letter code: NADH-quinone oxidoreductase subunit N (540 aa).

The next 14 membrane-spanning stretches (helical) occupy residues 24–44 (LSPMLIVFGVAVAGVLVEAFL), 54–74 (LVLALGGLTAAFVAVVLLAGT), 88–108 (PTLFLQGTILLISIPAILIIA), 158–178 (APGHTEVFPLTLFAVGGMLLF), 184–204 (LLTMFVALEVLSLPLYLLCGL), 219–239 (YFLLGAFSSAFFLFGVALLYG), 263–283 (ALIGTALLSVGLLFKIGAVPF), 295–315 (PTPITAFMAAATKVAAVGAML), 331–351 (PVMWGVAILTMVVGAVMAVTQ), 357–377 (MLAYSSVAHAGFILTGLVAAN), 385–405 (MFYLLAYGFSTLGAFAVVTLV), 428–448 (VGGVFALFLLAFAGIPLTSGF), 462–482 (GAVPLVLVGVVSSAIAAFFYV), and 505–525 (MFTAAAIAVGVVVTVVLGILP).

This sequence belongs to the complex I subunit 2 family. NDH-1 is composed of 14 different subunits. Subunits NuoA, H, J, K, L, M, N constitute the membrane sector of the complex.

The protein localises to the cell membrane. The catalysed reaction is a quinone + NADH + 5 H(+)(in) = a quinol + NAD(+) + 4 H(+)(out). NDH-1 shuttles electrons from NADH, via FMN and iron-sulfur (Fe-S) centers, to quinones in the respiratory chain. The immediate electron acceptor for the enzyme in this species is believed to be a menaquinone. Couples the redox reaction to proton translocation (for every two electrons transferred, four hydrogen ions are translocated across the cytoplasmic membrane), and thus conserves the redox energy in a proton gradient. The chain is NADH-quinone oxidoreductase subunit N from Rhodococcus opacus (strain B4).